The primary structure comprises 306 residues: Beta-lactamase (306 aa).

The signal sequence occupies residues Met-1–Ala-36. Catalysis depends on Ser-89, which acts as the Acyl-ester intermediate. Lys-251–Gly-253 contributes to the substrate binding site.

The protein belongs to the class-A beta-lactamase family.

The protein localises to the secreted. The enzyme catalyses a beta-lactam + H2O = a substituted beta-amino acid. This protein is a beta-lactamase with a substrate specificity for penicillins. The sequence is that of Beta-lactamase (penP) from Bacillus subtilis (strain 168).